The chain runs to 103 residues: A-type ATP synthase subunit F (103 aa).

This sequence belongs to the V-ATPase F subunit family. In terms of assembly, has multiple subunits with at least A(3), B(3), C, D, E, F, H, I and proteolipid K(x).

It localises to the cell membrane. In terms of biological role, component of the A-type ATP synthase that produces ATP from ADP in the presence of a proton gradient across the membrane. The protein is A-type ATP synthase subunit F of Pyrococcus furiosus (strain ATCC 43587 / DSM 3638 / JCM 8422 / Vc1).